Here is a 1401-residue protein sequence, read N- to C-terminus: MDGDSSSSSGGSGPAPGPGPEGEQRPEGEPLAPDGGSPDSTQTKAVPPEASPERSCSLHSCPLEDPSSSSGPPPTTSTLQPVGPSSPLAPAHFTYPRALQEYQGGSSLPGLGDRAALCSHGSSLSPSPAPSQRDGTWKPPAVQHHVVSVRQERAFQMPKSYSQLIAEWPVAVLMLCLAVIFLCTLAGLLGARLPDFSKPLLGFEPRDTDIGSKLVVWRALQALTGPRKLLFLSPDLELNSSSSHNTLRPAPRGSAQESAVRPRRMVEPLEDRRQENFFCGPPEKSYAKLVFMSTSSGSLWNLHAIHSMCRMEQDQIRSHTSFGALCQRTAANQCCPSWSLGNYLAVLSNRSSCLDTTQADAARTLALLRTCALYYHSGALVPSCLGPGQNKSPRCAQVPTKCSQSSAIYQLLHFLLDRDFLSPQTTDYQVPSLKYSLLFLPTPKGASLMDIYLDRLATPWGLADNYTSVTGMDLGLKQELLRHFLVQDTVYPLLALVAIFFGMALYLRSLFLTLMVLLGVLGSLLVAFFLYQVAFRMAYFPFVNLAALLLLSSVCANHTLIFFDLWRLSKSQLPSGGLAQRVGRTMHHFGYLLLVSGLTTSAAFYASYLSRLPAVRCLALFMGTAVLVHLALTLVWLPASAVLHERYLARGCARRARGRWEGSAPRRLLLALHRRLRGLRRAAAGTSRLLFQRLLPCGVIKFRYIWICWFAALAAGGAYIAGVSPRLRLPTLPPPGGQVFRPSHPFERFDAEYRQLFLFEQLPQGEGGHMPVVLVWGVLPVDTGDPLDPRSNSSLVRDPAFSASGPEAQRWLLALCHRARNQSFFDTLQEGWPTLCFVETLQRWMESPSCARLGPDLCCGHSDFPWAPQFFLHCLKMMALEQGPDGTQDLGLRFDAHGSLAALVLQFQTNFRNSPDYNQTQLFYNEVSHWLAAELGMAPPGLRRGWFTSRLELYSLQHSLSTEPAVVLGLALALAFATLLLGTWNVPLSLFSVAAVAGTVLLTVGLLVLLEWQLNTAEALFLSASVGLSVDFTVNYCISYHLCPHPDRLSRVAFSLRQTSCATAVGAAALFAAGVLMLPATVLLYRKLGIILMMVKCVSCGFASFFFQSLCCFFGPEKNCGQILWPCAHLPWDAGTGDPGGEKAGRPRPGSVGGMPGSCSEQYELQPLARRRSPSFDTSTATSKLSHRPSVLSEDLQLHDGPCCSRPPPAPASPRELLLDHQAVFSQCPALQTSSPYKQAGPSPKTRARQDSQGEEAEPLPASPEAPAHSPKAKAADPPDGFCSSASTLEGLSVSDETCLSTSEPSARVPDSVGVSPDDLDDTGQPVLERGQLNGKRDTLWLALRETVYDPSLPASHHSSLSWKGRGGPGDGSPVVLPNSQPDLPDVWLRRPSTHTSGYSS.

2 disordered regions span residues 1–91 (MDGD…LAPA) and 113–138 (DRAALCSHGSSLSPSPAPSQRDGTWK). The helical transmembrane segment at 170-190 (VAVLMLCLAVIFLCTLAGLLG) threads the bilayer. N-linked (GlcNAc...) asparagine glycosylation occurs at asparagine 239. The tract at residues 241 to 264 (SSSHNTLRPAPRGSAQESAVRPRR) is disordered. 2 N-linked (GlcNAc...) asparagine glycosylation sites follow: asparagine 349 and asparagine 465. Positions 471 to 643 (GMDLGLKQEL…LVWLPASAVL (173 aa)) constitute an SSD domain. 11 helical membrane passes run 484–504 (FLVQDTVYPLLALVAIFFGMA), 510–530 (LFLTLMVLLGVLGSLLVAFFL), 542–562 (FVNLAALLLLSSVCANHTLIF), 589–609 (FGYLLLVSGLTTSAAFYASYL), 617–637 (CLALFMGTAVLVHLALTLVWL), 704–724 (YIWICWFAALAAGGAYIAGVS), 964–984 (PAVVLGLALALAFATLLLGTW), 990–1010 (LFSVAAVAGTVLLTVGLLVLL), 1019–1039 (ALFLSASVGLSVDFTVNYCIS), 1064–1084 (AVGAAALFAAGVLMLPATVLL), and 1088–1108 (LGIILMMVKCVSCGFASFFFQ). Disordered regions lie at residues 1169 to 1192 (ARRRSPSFDTSTATSKLSHRPSVL), 1229 to 1337 (PALQ…NGKR), and 1352 to 1401 (SLPA…GYSS). Residues 1175-1184 (SFDTSTATSK) show a composition bias toward polar residues. The segment covering 1259–1270 (PLPASPEAPAHS) has biased composition (low complexity). Residues 1284–1305 (SSASTLEGLSVSDETCLSTSEP) show a composition bias toward polar residues. The segment covering 1352 to 1362 (SLPASHHSSLS) has biased composition (low complexity). Arginine 1366 bears the Omega-N-methylarginine mark.

The protein belongs to the dispatched family.

Its subcellular location is the membrane. The sequence is that of Protein dispatched homolog 2 from Homo sapiens (Human).